The sequence spans 413 residues: RNA-binding protein 41 (413 aa).

The segment at 225–247 is disordered; that stretch reads SGSGTAEKPSLLQDKGKQAAQGK. Residues 309–387 enclose the RRM domain; sequence KVLYLKNLSP…KILVIEFAKS (79 aa).

Its function is as follows. May bind RNA. This chain is RNA-binding protein 41 (Rbm41), found in Mus musculus (Mouse).